Reading from the N-terminus, the 137-residue chain is Small ribosomal subunit protein uS9 (137 aa).

It belongs to the universal ribosomal protein uS9 family.

This is Small ribosomal subunit protein uS9 (rps9) from Saccharolobus solfataricus (strain ATCC 35092 / DSM 1617 / JCM 11322 / P2) (Sulfolobus solfataricus).